We begin with the raw amino-acid sequence, 215 residues long: Probable cutinase 3 (215 aa).

The first 17 residues, 1-17, serve as a signal peptide directing secretion; it reads MHFRALLVSALATLAMA. 2 disulfide bridges follow: C39–C118 and C65–C79. Residue S129 is the Nucleophile of the active site. A disulfide bond links C180 and C187. D184 is a catalytic residue. The Proton donor/acceptor role is filled by H197.

The protein belongs to the cutinase family.

The protein resides in the secreted. It carries out the reaction cutin + H2O = cutin monomers.. Its function is as follows. Catalyzes the hydrolysis of complex carboxylic polyesters found in the cell wall of plants. Degrades cutin, a macromolecule that forms the structure of the plant cuticle. The protein is Probable cutinase 3 of Aspergillus clavatus (strain ATCC 1007 / CBS 513.65 / DSM 816 / NCTC 3887 / NRRL 1 / QM 1276 / 107).